Reading from the N-terminus, the 132-residue chain is Large ribosomal subunit protein bL19 (132 aa).

Belongs to the bacterial ribosomal protein bL19 family.

Functionally, this protein is located at the 30S-50S ribosomal subunit interface and may play a role in the structure and function of the aminoacyl-tRNA binding site. The polypeptide is Large ribosomal subunit protein bL19 (Nitrosomonas europaea (strain ATCC 19718 / CIP 103999 / KCTC 2705 / NBRC 14298)).